Reading from the N-terminus, the 408-residue chain is Arginine deiminase (408 aa).

The active-site Amidino-cysteine intermediate is C397.

The protein belongs to the arginine deiminase family.

It is found in the cytoplasm. It catalyses the reaction L-arginine + H2O = L-citrulline + NH4(+). It participates in amino-acid degradation; L-arginine degradation via ADI pathway; carbamoyl phosphate from L-arginine: step 1/2. The chain is Arginine deiminase from Listeria innocua serovar 6a (strain ATCC BAA-680 / CLIP 11262).